The following is a 624-amino-acid chain: Forkhead box protein O1 (624 aa).

2 disordered regions span residues 1–62 (MAEA…PSAS) and 94–128 (APLSQHPPVPPAAAAAAAGGQLAGQPRKSSSSRRN). Phosphothreonine; by PKB/AKT1 or PKB/AKT2 and SGK1 is present on T24. Composition is skewed to low complexity over residues 37 to 62 (SATSSPAPSGGAAANPDGAAGLPSAS) and 105 to 119 (AAAAAAAGGQLAGQP). Residues 130–224 (WGNLSYADLI…KSGKSPRRRA (95 aa)) constitute a DNA-binding region (fork-head). DNA-binding stretches follow at residues 181–188 (NSIRHNLS) and 204–207 (SSWW). Phosphoserine; by STK4/MST1 is present on S182. 3 positions are modified to phosphoserine: S188, S204, and S205. A disordered region spans residues 204-306 (SSWWMLNPEG…RLSPIMTEQD (103 aa)). An N6-acetyllysine mark is found at K215 and K218. A Phosphoserine; by CDK1 modification is found at S219. 2 positions are modified to omega-N-methylarginine; by PRMT1: R221 and R223. A Nuclear localization signal motif is present at residues 221–223 (RRR). At S226 the chain carries Phosphoserine; by PKB/AKT1 and SGK1. K232, K235, and K244 each carry N6-acetyllysine. A compositionally biased stretch (basic residues) spans 234-245 (AKSRGRAAKKKA). Residues 253–532 (GAGDSPGSQF…RLAPVKTALQ (280 aa)) form a sufficient for interaction with NLK region. S257 and S268 each carry phosphoserine. Polar residues predominate over residues 279–296 (NWSTFRPRTSSNASTISG). S289 carries the post-translational modification Phosphoserine; by PKB/AKT1. S292 is modified (phosphoserine; by CK1 and SGK1). The residue at position 295 (S295) is a Phosphoserine; by CK1. S299 carries the phosphoserine; by DYRK1A modification. A Phosphothreonine modification is found at T303. Residues 333–428 (SEISNPENME…YGGMSQYCAP (96 aa)) are required for interaction with RUNX2. At K393 the chain carries N6-acetyllysine. The Required for interaction with SIRT1 motif lies at 431–435 (LKELL).

In terms of assembly, interacts with LRPPRC. Interacts with RUNX2; the interaction inhibits RUNX2 transcriptional activity and mediates the IGF1/insulin-dependent BGLAP expression in osteoblasts Interacts with PPP2R1A; the interaction regulates the dephosphorylation of FOXO1 at Thr-24 and Ser-263 leading to its nuclear import. Interacts with NLK. Interacts with SIRT1; the interaction results in the deacetylation of FOXO1 leading to activation of FOXO1-mediated transcription of genes involved in DNA repair and stress resistance. Binds to CDK1. Interacts with the 14-3-3 proteins, YWHAG and YWHAZ; the interactions require insulin-stimulated phosphorylation on Thr-24, promote nuclear exit and loss of transcriptional activity. Interacts with SKP2; the interaction ubiquitinates FOXO1 leading to its proteasomal degradation. The interaction requires the presence of KRIT1. Interacts (via the C-terminal half) with ATF4 (via its DNA binding domain); the interaction occurs in osteoblasts, regulates glucose homeostasis via suppression of beta-cell proliferation and subsequent decrease in insulin production. Interacts with PRMT1; the interaction methylates FOXO1, prevents PKB/AKT1 phosphorylation and retains FOXO1 in the nucleus. Interacts with EP300 and CREBBP; the interactions acetylate FOXO1. Interacts with SIRT2; the interaction is disrupted in response to oxidative stress or serum deprivation, leading to increased level of acetylated FOXO1, which promotes stress-induced autophagy by stimulating E1-like activating enzyme ATG7. Interacts (acetylated form) with ATG7; the interaction is increased in response to oxidative stress or serum deprivation and promotes the autophagic process leading to cell death. Interacts (acetylated form) with PPARG. Interacts with XBP1; this interaction is direct and leads to FOXO1 ubiquitination and degradation via the proteasome pathway. Interacts (via the Fork-head domain) with CEBPA; the interaction increases when FOXO1 is deacetylated. Interacts with WDFY2. Forms a complex with WDFY2 and AKT1. Interacts with CRY1. Interacts with PPIA/CYPA; the interaction promotes FOXO1 dephosphorylation, nuclear accumulation and transcriptional activity. Interacts with TOX4; FOXO1 is required for full induction of TOX4-dependent activity and the interaction is inhibited by insulin. Interacts (when phosphorylated on Ser-226) with STUB1/CHIP. In terms of processing, phosphorylation by NLK promotes nuclear export and inhibits the transcriptional activity. In response to growth factors, phosphorylation on Thr-24, Ser-226 and Ser-292 by PKB/AKT1 promotes nuclear export and inactivation of transactivational activity. Phosphorylation on Thr-24 is required for binding 14-3-3 proteins. Phosphorylation of Ser-226 decreases DNA-binding activity and promotes the phosphorylation of Thr-24 and Ser-289, permitting phosphorylation of Ser-292 and Ser-295, probably by CDK1, leading to nuclear exclusion and loss of function. Stress signals, such as response to oxygen or nitric oxide, attenuate the PKB/AKT1-mediated phosphorylation leading to nuclear retention. Phosphorylation of Ser-299 is independent of IGF1 and leads to reduced function. Dephosphorylated on Thr-24 and Ser-226 by PP2A in beta-cells under oxidative stress leading to nuclear retention. Phosphorylation of Ser-219 by CDK1 disrupts binding of 14-3-3 proteins leading to nuclear accumulation and has no effect on DNA binding nor transcriptional activity. Phosphorylation by STK4/MST1 on Ser-182, upon oxidative stress, inhibits binding to 14-3-3 proteins and nuclear export. PPIA/CYPA promotes its dephosphorylation on Ser-226. Post-translationally, ubiquitinated by SKP2. Ubiquitination leads to proteasomal degradation. Ubiquitinated by STUB1/CHIP; when Ser-226 is phosphorylated. Methylation inhibits AKT1-mediated phosphorylation at Ser-226 and is increased by oxidative stress. In terms of processing, acetylated. Acetylation at Lys-232 and Lys-244 are necessary for autophagic cell death induction. Deacetylated by SIRT2 in response to oxidative stress or serum deprivation, thereby negatively regulating FOXO1-mediated autophagic cell death. Once in the nucleus, acetylated by CREBBP/EP300. Acetylation diminishes the interaction with target DNA and attenuates the transcriptional activity. It increases the phosphorylation at Ser-226. Deacetylation by SIRT1 results in reactivation of the transcriptional activity. Oxidative stress by hydrogen peroxide treatment appears to promote deacetylation and uncoupling of insulin-induced phosphorylation. By contrast, resveratrol acts independently of acetylation. Acetylated at Lys-393, promoting its localization to the nucleus and transcription factor activity. Deacetylation at Lys-393 by SIRT6, promotes its translocation into the cytoplasm, preventing its transcription factor activity. Deacetylation and subsequent inhibition by SIRT6 has different effects depending on cell types: it inhibits gluconeogenesis in hepatocytes, promotes glucose sensing in pancreatic beta-cells and regulates lipid catabolism in brown adipocytes.

It is found in the cytoplasm. The protein resides in the nucleus. Its function is as follows. Transcription factor that is the main target of insulin signaling and regulates metabolic homeostasis in response to oxidative stress. Binds to the insulin response element (IRE) with consensus sequence 5'-TT[G/A]TTTTG-3' and the related Daf-16 family binding element (DBE) with consensus sequence 5'-TT[G/A]TTTAC-3'. Activity suppressed by insulin. Main regulator of redox balance and osteoblast numbers and controls bone mass. Orchestrates the endocrine function of the skeleton in regulating glucose metabolism. Also acts as a key regulator of chondrogenic commitment of skeletal progenitor cells in response to lipid availability: when lipids levels are low, translocates to the nucleus and promotes expression of SOX9, which induces chondrogenic commitment and suppresses fatty acid oxidation. Acts synergistically with ATF4 to suppress osteocalcin/BGLAP activity, increasing glucose levels and triggering glucose intolerance and insulin insensitivity. Also suppresses the transcriptional activity of RUNX2, an upstream activator of osteocalcin/BGLAP. Acts as an inhibitor of glucose sensing in pancreatic beta cells by acting as a transcription repressor and suppressing expression of PDX1. In hepatocytes, promotes gluconeogenesis by acting together with PPARGC1A and CEBPA to activate the expression of genes such as IGFBP1, G6PC1 and PCK1. Also promotes gluconeogenesis by directly promoting expression of PPARGC1A and G6PC1. Important regulator of cell death acting downstream of CDK1, PKB/AKT1 and STK4/MST1. Promotes neural cell death. Mediates insulin action on adipose tissue. Regulates the expression of adipogenic genes such as PPARG during preadipocyte differentiation and, adipocyte size and adipose tissue-specific gene expression in response to excessive calorie intake. Regulates the transcriptional activity of GADD45A and repair of nitric oxide-damaged DNA in beta-cells. Required for the autophagic cell death induction in response to starvation or oxidative stress in a transcription-independent manner. Mediates the function of MLIP in cardiomyocytes hypertrophy and cardiac remodeling. Positive regulator of apoptosis in cardiac smooth muscle cells as a result of its transcriptional activation of pro-apoptotic genes. Regulates endothelial cell (EC) viability and apoptosis in a PPIA/CYPA-dependent manner via transcription of CCL2 and BCL2L11 which are involved in EC chemotaxis and apoptosis. This Bos taurus (Bovine) protein is Forkhead box protein O1 (FOXO1).